Reading from the N-terminus, the 350-residue chain is Aminomethyltransferase (350 aa).

Belongs to the GcvT family. The glycine cleavage system is composed of four proteins: P, T, L and H.

The enzyme catalyses N(6)-[(R)-S(8)-aminomethyldihydrolipoyl]-L-lysyl-[protein] + (6S)-5,6,7,8-tetrahydrofolate = N(6)-[(R)-dihydrolipoyl]-L-lysyl-[protein] + (6R)-5,10-methylene-5,6,7,8-tetrahydrofolate + NH4(+). Functionally, the glycine cleavage system catalyzes the degradation of glycine. This Aquifex aeolicus (strain VF5) protein is Aminomethyltransferase.